A 164-amino-acid polypeptide reads, in one-letter code: Peptide deformylase-like (164 aa).

Glutamate 134 is a catalytic residue.

The protein belongs to the polypeptide deformylase family.

This is Peptide deformylase-like from Brucella melitensis biotype 1 (strain ATCC 23456 / CCUG 17765 / NCTC 10094 / 16M).